A 104-amino-acid polypeptide reads, in one-letter code: Protamine-2 (104 aa).

2 positions are modified to phosphoserine: serine 8 and serine 10. The interval 23-104 (WQEQGRNGQE…SRRRRRCRRY (82 aa)) is disordered. Residues 24 to 35 (QEQGRNGQEEQG) are compositionally biased toward low complexity. Position 37 is a phosphoserine (serine 37). The span at 54–104 (YRRRRCSRRRRYRIHRRRSRSCRRRRRRSCRYRRRPRRGCRSRRRRRCRRY) shows a compositional bias: basic residues.

The protein belongs to the protamine P2 family. As to quaternary structure, interacts with TDRP. In terms of processing, proteolytic processing into mature chains is required for histone eviction during spermatogenesis. Transition proteins (TNP1 and TNP2) are required for processing. As to expression, testis.

It is found in the nucleus. Its subcellular location is the chromosome. Its function is as follows. Protamines substitute for histones in the chromatin of sperm during the haploid phase of spermatogenesis. They compact sperm DNA into a highly condensed, stable and inactive complex. The chain is Protamine-2 (PRM2) from Callithrix jacchus (White-tufted-ear marmoset).